The chain runs to 863 residues: Ribosomal protein S6 kinase alpha-5 (863 aa).

Over residues 1–21 (MEGEGGGSGGAGTSGDSGDGG) the composition is skewed to gly residues. The disordered stretch occupies residues 1 to 22 (MEGEGGGSGGAGTSGDSGDGGE). The Protein kinase 1 domain occupies 48–317 (FELLKVLGTG…AEEIKEHLFF (270 aa)). ATP-binding positions include 54 to 62 (LGTGAYGKV) and Lys80. The active-site Proton acceptor is Asp176. Residue Ser211 is modified to Phosphoserine; by autocatalysis. One can recognise an AGC-kinase C-terminal domain in the interval 318-386 (EKIKWDDLAA…VAPSILFKRN (69 aa)). Phosphoserine; by MAPK1, MAPK3 and MAPK14 is present on Ser359. Phosphoserine; by autocatalysis is present on residues Ser375 and Ser380. Residues 428-675 (DKPLGEGSFS…SCDLWSLGVI (248 aa)) form the Protein kinase 2 domain. ATP is bound by residues 431–440 (LGEGSFSICR) and Lys454. Asp608 serves as the catalytic Proton acceptor. A Phosphothreonine; by MAPK1, MAPK3 and MAPK14 modification is found at Thr645. 4 positions are modified to phosphoserine: Ser711, Ser721, Ser755, and Ser759. Thr764 is modified (phosphothreonine). Residues 805-863 (AKRRKMKRTSTSTETRSSSSESSRSSSSQSHGKTTPTKTLQPSNPTEGSNPDTLFQFSD) form a disordered region. Residues 813-832 (TSTSTETRSSSSESSRSSSS) show a composition bias toward low complexity. Phosphoserine; by autocatalysis is present on residues Ser814, Ser816, and Ser822. Over residues 833–863 (QSHGKTTPTKTLQPSNPTEGSNPDTLFQFSD) the composition is skewed to polar residues. Ser862 carries the phosphoserine modification.

The protein belongs to the protein kinase superfamily. AGC Ser/Thr protein kinase family. S6 kinase subfamily. In terms of assembly, forms a complex with either MAPK1/ERK2 or MAPK3/ERK1 in quiescent cells which transiently dissociates following mitogenic stimulation. Also associates with MAPK14/p38-alpha. Activated RPS6KA5 associates with and phosphorylates the NF-kappa-B p65 subunit RELA. Interacts with CREBBP and EP300. The cofactor is Mg(2+). Post-translationally, ser-375 and Thr-645 phosphorylation is required for kinase activity. Ser-375 and Ser-211 are autophosphorylated by the C-terminal kinase domain, and their phosphorylation is essential for the catalytic activity of the N-terminal kinase domain. Phosphorylated at Ser-359, Thr-645 and Thr-764 by MAPK1/ERK2, MAPK3/ERK1 and MAPK14/p38-alpha. Autophosphorylated at Ser-814, Ser-816 and Ser-822 by the N-terminal kinase domain. In terms of processing, ubiquitinated.

The protein resides in the nucleus. The enzyme catalyses L-seryl-[protein] + ATP = O-phospho-L-seryl-[protein] + ADP + H(+). It catalyses the reaction L-threonyl-[protein] + ATP = O-phospho-L-threonyl-[protein] + ADP + H(+). With respect to regulation, activated by phosphorylation at Ser-359, Thr-645 and Thr-764 by MAPK1/ERK2, MAPK3/ERK1 and MAPK14/p38-alpha, and by further autophosphorylation of Ser-211, Ser-375 and Ser-380 by the activated C-terminal kinase domain. The active N-terminal kinase domain finally phosphorylates downstream substrates, as well as Ser-814, Ser-816 and Ser-822 in its own C-terminal region. Serine/threonine-protein kinase that is required for the mitogen or stress-induced phosphorylation of the transcription factors CREB1 and ATF1 and for the regulation of the transcription factors RELA, STAT3 and ETV1/ER81, and that contributes to gene activation by histone phosphorylation and functions in the regulation of inflammatory genes. Phosphorylates CREB1 and ATF1 in response to mitogenic or stress stimuli such as UV-C irradiation, epidermal growth factor (EGF) and anisomycin. Plays an essential role in the control of RELA transcriptional activity in response to TNF and upon glucocorticoid, associates in the cytoplasm with the glucocorticoid receptor NR3C1 and contributes to RELA inhibition and repression of inflammatory gene expression. In skeletal myoblasts is required for phosphorylation of RELA at 'Ser-276' during oxidative stress. In erythropoietin-stimulated cells, is necessary for the 'Ser-727' phosphorylation of STAT3 and regulation of its transcriptional potential. Phosphorylates ETV1/ER81 at 'Ser-191' and 'Ser-216', and thereby regulates its ability to stimulate transcription, which may be important during development and breast tumor formation. Directly represses transcription via phosphorylation of 'Ser-1' of histone H2A. Phosphorylates 'Ser-10' of histone H3 in response to mitogenics, stress stimuli and EGF, which results in the transcriptional activation of several immediate early genes, including proto-oncogenes c-fos/FOS and c-jun/JUN. May also phosphorylate 'Ser-28' of histone H3. Mediates the mitogen- and stress-induced phosphorylation of high mobility group protein 1 (HMGN1/HMG14). In lipopolysaccharide-stimulated primary macrophages, acts downstream of the Toll-like receptor TLR4 to limit the production of pro-inflammatory cytokines. Functions probably by inducing transcription of the MAP kinase phosphatase DUSP1 and the anti-inflammatory cytokine interleukin 10 (IL10), via CREB1 and ATF1 transcription factors. Plays a role in neuronal cell death by mediating the downstream effects of excitotoxic injury. Phosphorylates TRIM7 at 'Ser-106' in response to growth factor signaling via the MEK/ERK pathway, thereby stimulating its ubiquitin ligase activity. In Mus musculus (Mouse), this protein is Ribosomal protein S6 kinase alpha-5 (Rps6ka5).